The following is a 278-amino-acid chain: Probable aquaporin PIP2-8 (278 aa).

Position 1 is an N-acetylmethionine (methionine 1). At 1–36 (MSKEVSEEGRHGKDYVDPPPAPLLDMAELKLWSFYR) the chain is on the cytoplasmic side. Position 3 is an N6,N6-dimethyllysine (lysine 3). Residues 37–57 (AIIAEFIATLLFLYVTVATVI) traverse the membrane as a helical segment. Residues 58–74 (GHKNQTGPCGGVGLLGI) lie on the Extracellular side of the membrane. A helical transmembrane segment spans residues 75-95 (AWAFGGMIFVLVYCTAGISGG). At 96–116 (HINPAVTFGLFLARKVSLPRA) the chain is on the cytoplasmic side. The NPA 1 signature appears at 98–100 (NPA). Residues 117–137 (VAYMVAQCLGAICGVGLVKAF) form a helical membrane-spanning segment. Over 138-158 (MMTPYKRLGGGANTVADGYST) the chain is Extracellular. The helical transmembrane segment at 159-179 (GTALGAEIIGTFVLVYTVFSA) threads the bilayer. The Cytoplasmic portion of the chain corresponds to 180 to 192 (TDPKRSARDSHVP). Residues 193–213 (VLAPLPIGFAVFMVHLATIPI) traverse the membrane as a helical segment. Residues 214–240 (TGTGINPARSFGAAVIYNNEKAWDDHW) lie on the Extracellular side of the membrane. Residues 219–221 (NPA) carry the NPA 2 motif. The helical transmembrane segment at 241 to 261 (IFWVGPFVGALAAAAYHQYIL) threads the bilayer. The Cytoplasmic segment spans residues 262–278 (RAAAIKALASFRSNPTN). Serine 271 and serine 274 each carry phosphoserine.

Belongs to the MIP/aquaporin (TC 1.A.8) family. PIP (TC 1.A.8.11) subfamily. In terms of tissue distribution, expressed in roots and floral buds.

It is found in the cell membrane. Functionally, aquaporins facilitate the transport of water and small neutral solutes across cell membranes. This Arabidopsis thaliana (Mouse-ear cress) protein is Probable aquaporin PIP2-8 (PIP2-8).